We begin with the raw amino-acid sequence, 252 residues long: Imidazole glycerol phosphate synthase subunit HisF (252 aa).

Active-site residues include D11 and D130.

Belongs to the HisA/HisF family. Heterodimer of HisH and HisF.

The protein localises to the cytoplasm. The enzyme catalyses 5-[(5-phospho-1-deoxy-D-ribulos-1-ylimino)methylamino]-1-(5-phospho-beta-D-ribosyl)imidazole-4-carboxamide + L-glutamine = D-erythro-1-(imidazol-4-yl)glycerol 3-phosphate + 5-amino-1-(5-phospho-beta-D-ribosyl)imidazole-4-carboxamide + L-glutamate + H(+). It participates in amino-acid biosynthesis; L-histidine biosynthesis; L-histidine from 5-phospho-alpha-D-ribose 1-diphosphate: step 5/9. Its function is as follows. IGPS catalyzes the conversion of PRFAR and glutamine to IGP, AICAR and glutamate. The HisF subunit catalyzes the cyclization activity that produces IGP and AICAR from PRFAR using the ammonia provided by the HisH subunit. The sequence is that of Imidazole glycerol phosphate synthase subunit HisF from Streptococcus gordonii (strain Challis / ATCC 35105 / BCRC 15272 / CH1 / DL1 / V288).